The following is a 392-amino-acid chain: Putative RNA-binding protein Luc7-like 2 (392 aa).

Position 18 is a phosphoserine (serine 18). Residues 102–177 adopt a coiled-coil conformation; it reads EVAKKRLAET…EAEEVYRNSM (76 aa). Basic and acidic residues predominate over residues 235–257; that stretch reads KQEKRNQERLKRREEREREEREK. Residues 235 to 392 form a disordered region; it reads KQEKRNQERL…SSEEREAGEI (158 aa). Positions 258 to 321 are enriched in basic residues; sequence LRRSRSHSKN…RSRSHQRSRH (64 aa). A 5-hydroxylysine; by JMJD6 mark is found at lysine 266 and lysine 269. Composition is skewed to basic and acidic residues over residues 337 to 364 and 377 to 392; these read KERFRDQDLASCDRDRSSRDRSPRDRDR and RSEDRRSSEEREAGEI.

Belongs to the Luc7 family. As to quaternary structure, interacts with SCNM1.

Its subcellular location is the nucleus speckle. It localises to the nucleus. The protein localises to the nucleoplasm. Functionally, may bind to RNA via its Arg/Ser-rich domain. The chain is Putative RNA-binding protein Luc7-like 2 (LUC7L2) from Homo sapiens (Human).